Here is a 222-residue protein sequence, read N- to C-terminus: Putative N-acetylmannosamine-6-phosphate 2-epimerase (222 aa).

Belongs to the NanE family.

It carries out the reaction an N-acyl-D-glucosamine 6-phosphate = an N-acyl-D-mannosamine 6-phosphate. The protein operates within amino-sugar metabolism; N-acetylneuraminate degradation; D-fructose 6-phosphate from N-acetylneuraminate: step 3/5. Its function is as follows. Converts N-acetylmannosamine-6-phosphate (ManNAc-6-P) to N-acetylglucosamine-6-phosphate (GlcNAc-6-P). This is Putative N-acetylmannosamine-6-phosphate 2-epimerase from Staphylococcus aureus (strain MSSA476).